Reading from the N-terminus, the 334-residue chain is Deoxyhypusine synthase (334 aa).

NAD(+) is bound by residues 73–77 (SNIIS), 99–101 (TGG), Glu105, and Asp207. Spermidine is bound at residue 104 to 105 (EE). Residues Asp212 and His256 each contribute to the spermidine site. Residue 276–277 (NA) coordinates NAD(+). Residues 282 to 284 (GSD) and 291 to 297 (EAVSWGK) each bind spermidine. Lys297 acts as the Nucleophile in catalysis. An NAD(+)-binding site is contributed by 310–311 (DA).

It belongs to the deoxyhypusine synthase family. It depends on NAD(+) as a cofactor.

It carries out the reaction [eIF5A protein]-L-lysine + spermidine = [eIF5A protein]-deoxyhypusine + propane-1,3-diamine. It functions in the pathway protein modification; eIF5A hypusination. Functionally, catalyzes the NAD-dependent oxidative cleavage of spermidine and the subsequent transfer of the butylamine moiety of spermidine to the epsilon-amino group of a specific lysine residue of the eIF-5A precursor protein to form the intermediate deoxyhypusine residue. In Encephalitozoon cuniculi (strain GB-M1) (Microsporidian parasite), this protein is Deoxyhypusine synthase (DYS1).